The following is a 318-amino-acid chain: Very-long-chain 3-oxoacyl-CoA reductase-A (318 aa).

The chain crosses the membrane as a helical span at residues 15–35 (FWYLGVLAAAWWGLRAACCLL). 54–83 (GKWAVVTGATDGIGKAYAEELARRGMSIVL) lines the NADP(+) pocket. Transmembrane regions (helical) follow at residues 187–207 (GVIL…LTVY) and 281–301 (AIMG…SMGM). Residue serine 194 participates in substrate binding. The Proton acceptor role is filled by tyrosine 207.

The protein belongs to the short-chain dehydrogenases/reductases (SDR) family. 17-beta-HSD 3 subfamily.

It is found in the endoplasmic reticulum membrane. It catalyses the reaction a very-long-chain (3R)-3-hydroxyacyl-CoA + NADP(+) = a very-long-chain 3-oxoacyl-CoA + NADPH + H(+). It carries out the reaction 17beta-estradiol + NAD(+) = estrone + NADH + H(+). The catalysed reaction is 17beta-estradiol + NADP(+) = estrone + NADPH + H(+). Its pathway is lipid metabolism; fatty acid biosynthesis. It functions in the pathway steroid biosynthesis; estrogen biosynthesis. Catalyzes the second of the four reactions of the long-chain fatty acids elongation cycle. This endoplasmic reticulum-bound enzymatic process, allows the addition of two carbons to the chain of long- and very long-chain fatty acids/VLCFAs per cycle. This enzyme has a 3-ketoacyl-CoA reductase activity, reducing 3-ketoacyl-CoA to 3-hydroxyacyl-CoA, within each cycle of fatty acid elongation. Thereby, it may participate in the production of VLCFAs of different chain lengths that are involved in multiple biological processes as precursors of membrane lipids and lipid mediators. May also catalyze the transformation of estrone (E1) into estradiol (E2) and play a role in estrogen formation. The sequence is that of Very-long-chain 3-oxoacyl-CoA reductase-A (hsd17b12-a) from Xenopus laevis (African clawed frog).